The primary structure comprises 236 residues: Enolase-phosphatase E1 (236 aa).

Belongs to the HAD-like hydrolase superfamily. MasA/MtnC family. As to quaternary structure, monomer. It depends on Mg(2+) as a cofactor.

The catalysed reaction is 5-methylsulfanyl-2,3-dioxopentyl phosphate + H2O = 1,2-dihydroxy-5-(methylsulfanyl)pent-1-en-3-one + phosphate. Its pathway is amino-acid biosynthesis; L-methionine biosynthesis via salvage pathway; L-methionine from S-methyl-5-thio-alpha-D-ribose 1-phosphate: step 3/6. It participates in amino-acid biosynthesis; L-methionine biosynthesis via salvage pathway; L-methionine from S-methyl-5-thio-alpha-D-ribose 1-phosphate: step 4/6. Its function is as follows. Bifunctional enzyme that catalyzes the enolization of 2,3-diketo-5-methylthiopentyl-1-phosphate (DK-MTP-1-P) into the intermediate 2-hydroxy-3-keto-5-methylthiopentenyl-1-phosphate (HK-MTPenyl-1-P), which is then dephosphorylated to form the acireductone 1,2-dihydroxy-3-keto-5-methylthiopentene (DHK-MTPene). This is Enolase-phosphatase E1 from Frankia alni (strain DSM 45986 / CECT 9034 / ACN14a).